Reading from the N-terminus, the 184-residue chain is ATP synthase subunit b, chloroplastic (184 aa).

Residues 27 to 49 (LATNLINLSVVLGVLIFFGKGVL) traverse the membrane as a helical segment.

This sequence belongs to the ATPase B chain family. As to quaternary structure, F-type ATPases have 2 components, F(1) - the catalytic core - and F(0) - the membrane proton channel. F(1) has five subunits: alpha(3), beta(3), gamma(1), delta(1), epsilon(1). F(0) has four main subunits: a(1), b(1), b'(1) and c(10-14). The alpha and beta chains form an alternating ring which encloses part of the gamma chain. F(1) is attached to F(0) by a central stalk formed by the gamma and epsilon chains, while a peripheral stalk is formed by the delta, b and b' chains.

The protein localises to the plastid. It is found in the chloroplast thylakoid membrane. F(1)F(0) ATP synthase produces ATP from ADP in the presence of a proton or sodium gradient. F-type ATPases consist of two structural domains, F(1) containing the extramembraneous catalytic core and F(0) containing the membrane proton channel, linked together by a central stalk and a peripheral stalk. During catalysis, ATP synthesis in the catalytic domain of F(1) is coupled via a rotary mechanism of the central stalk subunits to proton translocation. Its function is as follows. Component of the F(0) channel, it forms part of the peripheral stalk, linking F(1) to F(0). This chain is ATP synthase subunit b, chloroplastic, found in Manihot esculenta (Cassava).